The following is a 490-amino-acid chain: Probable glycine dehydrogenase (decarboxylating) subunit 2 (490 aa).

K273 carries the post-translational modification N6-(pyridoxal phosphate)lysine.

This sequence belongs to the GcvP family. C-terminal subunit subfamily. The glycine cleavage system is composed of four proteins: P, T, L and H. In this organism, the P 'protein' is a heterodimer of two subunits. Pyridoxal 5'-phosphate serves as cofactor.

It carries out the reaction N(6)-[(R)-lipoyl]-L-lysyl-[glycine-cleavage complex H protein] + glycine + H(+) = N(6)-[(R)-S(8)-aminomethyldihydrolipoyl]-L-lysyl-[glycine-cleavage complex H protein] + CO2. Functionally, the glycine cleavage system catalyzes the degradation of glycine. The P protein binds the alpha-amino group of glycine through its pyridoxal phosphate cofactor; CO(2) is released and the remaining methylamine moiety is then transferred to the lipoamide cofactor of the H protein. This chain is Probable glycine dehydrogenase (decarboxylating) subunit 2, found in Staphylococcus aureus (strain Mu50 / ATCC 700699).